A 116-amino-acid polypeptide reads, in one-letter code: Large ribosomal subunit protein bL19 (116 aa).

It belongs to the bacterial ribosomal protein bL19 family.

This protein is located at the 30S-50S ribosomal subunit interface and may play a role in the structure and function of the aminoacyl-tRNA binding site. This Pseudomonas fluorescens (strain ATCC BAA-477 / NRRL B-23932 / Pf-5) protein is Large ribosomal subunit protein bL19.